A 155-amino-acid polypeptide reads, in one-letter code: Ribosome maturation factor RimP (155 aa).

This sequence belongs to the RimP family.

The protein resides in the cytoplasm. Its function is as follows. Required for maturation of 30S ribosomal subunits. The polypeptide is Ribosome maturation factor RimP (Prochlorococcus marinus (strain AS9601)).